The primary structure comprises 195 residues: uncharacterized protein (195 aa).

A signal peptide spans 1-20 (MLKFRLILTVLTVLLITVNG). A disordered region spans residues 26 to 195 (IENKSSTSSS…LHNQYPPQQN (170 aa)). N-linked (GlcNAc...) asparagine glycosylation occurs at asparagine 28. 2 stretches are compositionally biased toward low complexity: residues 29–43 (KSSTSSSKSAASKPS) and 74–104 (QSKTAQAQPQPSAQSTNKPSFQNGQQSGGNQ). 2 stretches are compositionally biased toward polar residues: residues 112-123 (DPYQTGSYQGPY) and 151-176 (PKNTVQSGYQQPMPGQQSMQVPNNGP).

Component of the acid-soluble organic matrix of calcified layers of the shell (at protein level).

It is found in the secreted. This is an uncharacterized protein from Lottia gigantea (Giant owl limpet).